The primary structure comprises 168 residues: Photosystem I assembly protein Ycf3 (168 aa).

TPR repeat units lie at residues 35–68, 72–105, and 120–153; these read AFTYYRDGMSAQSEGNYAEALQNYYEAMRLEIDP, SYILYNIGLIHTSNGEHTKALEYYFRALERNPFL, and GEQAIRQGDSEIAEAWFDQAAEYWKQAIALTPGN.

Belongs to the Ycf3 family.

Its subcellular location is the plastid. The protein resides in the chloroplast thylakoid membrane. Its function is as follows. Essential for the assembly of the photosystem I (PSI) complex. May act as a chaperone-like factor to guide the assembly of the PSI subunits. This chain is Photosystem I assembly protein Ycf3, found in Oenothera elata subsp. hookeri (Hooker's evening primrose).